A 766-amino-acid chain; its full sequence is Tripartite terminase subunit 1 (766 aa).

The C3H1-type zinc-finger motif lies at 191-219 (CSVCFEELCVTANQGEAVHRRLLECTCDH). 683–690 (FSSVFHCG) contributes to the ATP binding site.

The protein belongs to the herpesviridae TRM1 protein family. As to quaternary structure, associates with TRM2 and TRM3 to form the tripartite terminase complex. Interacts with portal protein.

The protein resides in the host nucleus. In terms of biological role, component of the molecular motor that translocates viral genomic DNA in empty capsid during DNA packaging. Forms a tripartite terminase complex together with TRM2 and TRM3 in the host cytoplasm. Once the complex reaches the host nucleus, it interacts with the capsid portal vertex. This portal forms a ring in which genomic DNA is translocated into the capsid. TRM1 carries an endonuclease activity that plays an important role for the cleavage of concatemeric viral DNA into unit length genomes. This chain is Tripartite terminase subunit 1, found in Equus caballus (Horse).